We begin with the raw amino-acid sequence, 227 residues long: Adapter protein MecA 1 (227 aa).

This sequence belongs to the MecA family. In terms of assembly, homodimer.

Functionally, enables the recognition and targeting of unfolded and aggregated proteins to the ClpC protease or to other proteins involved in proteolysis. Acts negatively in the development of competence by binding ComK and recruiting it to the ClpCP protease. When overexpressed, inhibits sporulation. Also involved in Spx degradation by ClpC. The sequence is that of Adapter protein MecA 1 (mecA1) from Bacillus anthracis.